The sequence spans 209 residues: Pyridoxal 5'-phosphate synthase subunit PdxT (209 aa).

Position 58 to 60 (58 to 60 (GES)) interacts with L-glutamine. Cys90 (nucleophile) is an active-site residue. L-glutamine-binding positions include Arg119 and 148 to 149 (IR). Residues His185 and Glu187 each act as charge relay system in the active site.

The protein belongs to the glutaminase PdxT/SNO family. As to quaternary structure, in the presence of PdxS, forms a dodecamer of heterodimers. Only shows activity in the heterodimer.

The enzyme catalyses aldehydo-D-ribose 5-phosphate + D-glyceraldehyde 3-phosphate + L-glutamine = pyridoxal 5'-phosphate + L-glutamate + phosphate + 3 H2O + H(+). It catalyses the reaction L-glutamine + H2O = L-glutamate + NH4(+). It participates in cofactor biosynthesis; pyridoxal 5'-phosphate biosynthesis. Its function is as follows. Catalyzes the hydrolysis of glutamine to glutamate and ammonia as part of the biosynthesis of pyridoxal 5'-phosphate. The resulting ammonia molecule is channeled to the active site of PdxS. This is Pyridoxal 5'-phosphate synthase subunit PdxT from Clavibacter michiganensis subsp. michiganensis (strain NCPPB 382).